Consider the following 766-residue polypeptide: Dipeptidyl peptidase 4 (766 aa).

The Cytoplasmic segment spans residues 1–6; sequence MKTPWK. The helical; Signal-anchor for type II membrane protein transmembrane segment at 7–27 threads the bilayer; sequence VLLGLLGIAALVTVITVPVVL. The Extracellular portion of the chain corresponds to 28 to 766; sequence LNKGTDDAAA…HFLKQCFSLP (739 aa). 8 N-linked (GlcNAc...) asparagine glycosylation sites follow: Asn85, Asn92, Asn150, Asn179, Asn219, Asn229, Asn279, and Asn321. 3 disulfides stabilise this stretch: Cys385–Cys394, Cys444–Cys447, and Cys454–Cys472. The Charge relay system role is filled by Ser630. A disulfide bond links Cys649 and Cys762. Asn685 carries an N-linked (GlcNAc...) asparagine glycan. Residues Asp708 and His740 each act as charge relay system in the active site.

Belongs to the peptidase S9B family. DPPIV subfamily. As to quaternary structure, monomer. Homodimer. Heterodimer with Seprase (FAP). Requires homodimerization for optimal dipeptidyl peptidase activity and T-cell costimulation. Found in a membrane raft complex, at least composed of BCL10, CARD11, DPP4 and IKBKB. Associates with collagen. Interacts with PTPRC; the interaction is enhanced in an interleukin-12-dependent manner in activated lymphocytes. Interacts (via extracellular domain) with ADA; does not inhibit its dipeptidyl peptidase activity. Interacts with CAV1 (via the N-terminus); the interaction is direct. Interacts (via cytoplasmic tail) with CARD11 (via PDZ domain); its homodimerization is necessary for interaction with CARD11. Interacts with IGF2R; the interaction is direct. Interacts with GPC3. Post-translationally, the soluble form (Dipeptidyl peptidase 4 soluble form also named SDPP) derives from the membrane form (Dipeptidyl peptidase 4 membrane form also named MDPP) by proteolytic processing. N- and O-Glycosylated. In terms of processing, phosphorylated. Mannose 6-phosphate residues in the carbohydrate moiety are necessary for interaction with IGF2R in activated T-cells. Mannose 6-phosphorylation is induced during T-cell activation.

The protein resides in the secreted. Its subcellular location is the cell membrane. It is found in the apical cell membrane. It localises to the cell projection. The protein localises to the invadopodium membrane. The protein resides in the lamellipodium membrane. Its subcellular location is the cell junction. It is found in the membrane raft. It catalyses the reaction Release of an N-terminal dipeptide, Xaa-Yaa-|-Zaa-, from a polypeptide, preferentially when Yaa is Pro, provided Zaa is neither Pro nor hydroxyproline.. With respect to regulation, inhibited by GPC3 and diprotin A. Its function is as follows. Cell surface glycoprotein receptor involved in the costimulatory signal essential for T-cell receptor (TCR)-mediated T-cell activation. Acts as a positive regulator of T-cell coactivation, by binding at least ADA, CAV1, IGF2R, and PTPRC. Its binding to CAV1 and CARD11 induces T-cell proliferation and NF-kappa-B activation in a T-cell receptor/CD3-dependent manner. Its interaction with ADA also regulates lymphocyte-epithelial cell adhesion. In association with FAP is involved in the pericellular proteolysis of the extracellular matrix (ECM), the migration and invasion of endothelial cells into the ECM. May be involved in the promotion of lymphatic endothelial cells adhesion, migration and tube formation. When overexpressed, enhanced cell proliferation, a process inhibited by GPC3. Also acts as a serine exopeptidase with a dipeptidyl peptidase activity that regulates various physiological processes by cleaving peptides in the circulation, including many chemokines, mitogenic growth factors, neuropeptides and peptide hormones such as brain natriuretic peptide 32. Removes N-terminal dipeptides sequentially from polypeptides having unsubstituted N-termini provided that the penultimate residue is proline. This is Dipeptidyl peptidase 4 (DPP4) from Sus scrofa (Pig).